We begin with the raw amino-acid sequence, 65 residues long: Cell death protein rpr (65 aa).

In terms of assembly, interacts with Diap2 (via BIR2 domain).

Activator of apoptosis, as well as grim and hid, that acts on the effector Dredd. In Drosophila melanogaster (Fruit fly), this protein is Cell death protein rpr (rpr).